Reading from the N-terminus, the 784-residue chain is E3 ubiquitin-protein ligase RNF43 (784 aa).

The N-terminal stretch at 1–23 is a signal peptide; sequence MSGGHQLQLAVLWPWLLMATLHA. Over 24 to 197 the chain is Extracellular; the sequence is GFGHTGRVLA…LKEPPAGANY (174 aa). N-linked (GlcNAc...) asparagine glycans are attached at residues N62 and N92. A disulfide bridge links C91 with C119. The chain crosses the membrane as a helical span at residues 198–218; it reads DVWILLTVVGTVFVIILASVL. At 219–784 the chain is on the cytoplasmic side; it reads RIRCRPHHSR…ELEELCEQAV (566 aa). The RING-type; atypical zinc finger occupies 272–313; it reads CAICLEEFSEGQELRVISCLHEFHRTCVDPWLYQHRTCPLCM. Disordered regions lie at residues 364-407, 459-478, and 516-671; these read TSVA…HLAV, ADGPASDSSSGPCHGSSSDS, and DLQG…SLPP. Over residues 386-395 the composition is skewed to basic residues; that stretch reads RHQRLPRTSH. A compositionally biased stretch (low complexity) spans 464–478; the sequence is SDSSSGPCHGSSSDS. A compositionally biased stretch (basic residues) spans 548 to 568; the sequence is IHYHRHRHHHYKRQFQWHGRK. Residues 583–608 are compositionally biased toward polar residues; it reads SHTQLEPSLPDQQLITPNPTASSMLP. The span at 618-629 shows a compositional bias: low complexity; that stretch reads EPAPGLAEASSP.

It belongs to the ZNRF3 family. Interacts with AKAP8L, NONO and SFPQ. Interacts with FZD5. Identified in a complex composed of RNF43, LGR5 and RSPO1. Interacts with RSPO2. Interacts with LMBR1L. Post-translationally, autoubiquitinated. In terms of tissue distribution, expressed in crypt base columnar cells of small intestinal epithelium. Crypt base columnar cells are small cycling cells residing between the terminally differentiated Paneth cells at crypt bottoms. Colocalizes with Lgr5-positive stem cells.

The protein localises to the cell membrane. The protein resides in the endoplasmic reticulum membrane. Its subcellular location is the nucleus envelope. It catalyses the reaction S-ubiquitinyl-[E2 ubiquitin-conjugating enzyme]-L-cysteine + [acceptor protein]-L-lysine = [E2 ubiquitin-conjugating enzyme]-L-cysteine + N(6)-ubiquitinyl-[acceptor protein]-L-lysine.. It participates in protein modification; protein ubiquitination. Functionally, E3 ubiquitin-protein ligase that acts as a negative regulator of the Wnt signaling pathway by mediating the ubiquitination, endocytosis and subsequent degradation of Wnt receptor complex components Frizzled. Acts on both canonical and non-canonical Wnt signaling pathway. Along with RSPO2 and ZNRF3, constitutes a master switch that governs limb specification. In Mus musculus (Mouse), this protein is E3 ubiquitin-protein ligase RNF43 (Rnf43).